The sequence spans 90 residues: DNA-directed RNA polymerase subunit omega (90 aa).

Residues 69–90 (RQEQQEQEAAELAAVSSIAHTR) form a disordered region.

It belongs to the RNA polymerase subunit omega family. As to quaternary structure, the RNAP catalytic core consists of 2 alpha, 1 beta, 1 beta' and 1 omega subunit. When a sigma factor is associated with the core the holoenzyme is formed, which can initiate transcription.

It carries out the reaction RNA(n) + a ribonucleoside 5'-triphosphate = RNA(n+1) + diphosphate. Promotes RNA polymerase assembly. Latches the N- and C-terminal regions of the beta' subunit thereby facilitating its interaction with the beta and alpha subunits. This chain is DNA-directed RNA polymerase subunit omega, found in Vibrio atlanticus (strain LGP32) (Vibrio splendidus (strain Mel32)).